The primary structure comprises 262 residues: Troponin T, slow skeletal muscle (262 aa).

Residues 1–31 (MSDAEEQEYEEEQPEEEEAAEEEEAPEEPEP) show a composition bias toward acidic residues. Disordered stretches follow at residues 1-59 (MSDA…PEGE), 107-153 (RAER…KKKV), and 165-197 (LVKAEQKRGKRQTGREMKQRILSERKKPLNIDH). A Phosphoserine; by CK2 modification is found at Ser2. Basic and acidic residues predominate over residues 32–41 (VAEREEERPK). The span at 43 to 55 (SRPVVPPLIPPKI) shows a compositional bias: pro residues. Composition is skewed to basic and acidic residues over residues 107–149 (RAER…DDAK) and 177–197 (TGREMKQRILSERKKPLNIDH).

This sequence belongs to the troponin T family. In terms of assembly, interacts with TPM3.

In terms of biological role, troponin T is the tropomyosin-binding subunit of troponin, the thin filament regulatory complex which confers calcium-sensitivity to striated muscle actomyosin ATPase activity. The sequence is that of Troponin T, slow skeletal muscle (TNNT1) from Sus scrofa (Pig).